Reading from the N-terminus, the 331-residue chain is Phosphate acyltransferase (331 aa).

This sequence belongs to the PlsX family. Homodimer. Probably interacts with PlsY.

The protein resides in the cytoplasm. It catalyses the reaction a fatty acyl-[ACP] + phosphate = an acyl phosphate + holo-[ACP]. The protein operates within lipid metabolism; phospholipid metabolism. Its function is as follows. Catalyzes the reversible formation of acyl-phosphate (acyl-PO(4)) from acyl-[acyl-carrier-protein] (acyl-ACP). This enzyme utilizes acyl-ACP as fatty acyl donor, but not acyl-CoA. In Ureaplasma parvum serovar 3 (strain ATCC 27815 / 27 / NCTC 11736), this protein is Phosphate acyltransferase.